A 396-amino-acid chain; its full sequence is Probable sugar efflux transporter (396 aa).

12 helical membrane-spanning segments follow: residues 15–35 (VVTLAVAAFIFNTTEFVPVGL), 50–70 (VGIMLTIYAWVVALMSLPFML), 81–101 (LICLFVVFIASHVLSFLSWSF), 103–123 (VLVISRIGVAFAHAIFWSITA), 136–156 (AQALSLIATGTALAMVLGLPL), 170–190 (FFAIGIGAFITLLCLIKLLPL), 209–229 (PALMSIYLLTVVVVTAHYTAY), 246–266 (FATALLLLLGGAGIIGSVIFG), 275–295 (ALVSTAIALLLVCLALLLPAA), 299–319 (IHLGVLSIFWGIAMMIIGLGM), 333–353 (VAMALFSGIFNIGIGAGALVG), and 364–384 (MIGYVGAVPAFAALIWSIIIF).

It belongs to the major facilitator superfamily. SotB (TC 2.A.1.2) family.

The protein localises to the cell inner membrane. Involved in the efflux of sugars. The physiological role may be the reduction of the intracellular concentration of toxic sugars or sugar metabolites. This Escherichia coli O17:K52:H18 (strain UMN026 / ExPEC) protein is Probable sugar efflux transporter.